The primary structure comprises 612 residues: Dihydroxy-acid dehydratase (612 aa).

D81 contacts Mg(2+). Position 122 (C122) interacts with [2Fe-2S] cluster. Residues D123 and K124 each contribute to the Mg(2+) site. N6-carboxylysine is present on K124. Residue C195 participates in [2Fe-2S] cluster binding. Position 491 (E491) interacts with Mg(2+). S517 serves as the catalytic Proton acceptor.

The protein belongs to the IlvD/Edd family. In terms of assembly, homodimer. Requires [2Fe-2S] cluster as cofactor. The cofactor is Mg(2+).

The catalysed reaction is (2R)-2,3-dihydroxy-3-methylbutanoate = 3-methyl-2-oxobutanoate + H2O. The enzyme catalyses (2R,3R)-2,3-dihydroxy-3-methylpentanoate = (S)-3-methyl-2-oxopentanoate + H2O. Its pathway is amino-acid biosynthesis; L-isoleucine biosynthesis; L-isoleucine from 2-oxobutanoate: step 3/4. It functions in the pathway amino-acid biosynthesis; L-valine biosynthesis; L-valine from pyruvate: step 3/4. In terms of biological role, functions in the biosynthesis of branched-chain amino acids. Catalyzes the dehydration of (2R,3R)-2,3-dihydroxy-3-methylpentanoate (2,3-dihydroxy-3-methylvalerate) into 2-oxo-3-methylpentanoate (2-oxo-3-methylvalerate) and of (2R)-2,3-dihydroxy-3-methylbutanoate (2,3-dihydroxyisovalerate) into 2-oxo-3-methylbutanoate (2-oxoisovalerate), the penultimate precursor to L-isoleucine and L-valine, respectively. This chain is Dihydroxy-acid dehydratase, found in Sinorhizobium fredii (strain NBRC 101917 / NGR234).